Reading from the N-terminus, the 175-residue chain is Regenerating islet-derived protein 3-beta (175 aa).

The N-terminal stretch at methionine 1–glycine 26 is a signal peptide. Positions glutamate 27 to arginine 37 are excised as a propeptide. Cystine bridges form between cysteine 40–cysteine 51, cysteine 68–cysteine 171, and cysteine 146–cysteine 163. One can recognise a C-type lectin domain in the interval tyrosine 47–lysine 172. Residue histidine 107 coordinates Zn(2+). Residues glutamate 114–asparagine 116 carry the EPN motif. Glutamate 121 contributes to the Zn(2+) binding site.

In terms of assembly, forms a hexameric membrane-permeabilizing oligomeric pore on membrane phospholipids. The hexamer is formed by three dimers related by helical symmetry. Forms filaments, filamentation traps pore complexes and limits damage to host cells. Interacts with EXTL3. In terms of processing, proteolytic processing by trypsin removes an inhibitory N-terminal propeptide and is essential for peptidoglycan binding and antibacterial activity. As to expression, constitutively expressed in intestine.

It localises to the secreted. With respect to regulation, lipopolysaccharide inhibits pore-forming activity, explaining why is bactericidal for Gram-positive but not Gram-negative bacteria. In terms of biological role, bactericidal C-type lectin which acts against several intestinal Gram-positive bacteria and Gram-negative bacteria. Lacks antibacterial activity against S.typhimurium. May play a role in protection against infection with S.enteritidis by inhibiting its translocation from the gut lumen into intestinal tissues and further extraintestinal tissues. Acts as a hormone in response to different stimuli. Secreted by different cell types to activate its receptor EXTL3 and induce cell specific signaling pathways. In pancreas, is able stimulate cell proliferation. The sequence is that of Regenerating islet-derived protein 3-beta from Rattus norvegicus (Rat).